A 480-amino-acid polypeptide reads, in one-letter code: tRNA-2-methylthio-N(6)-dimethylallyladenosine synthase (480 aa).

Positions 31-151 (RGLHVITWGC…LPEMVARAAR (121 aa)) constitute an MTTase N-terminal domain. [4Fe-4S] cluster is bound by residues Cys-40, Cys-76, Cys-114, Cys-192, Cys-196, and Cys-199. The Radical SAM core domain maps to 178–410 (SPGGITSFLT…QALLRTQQDA (233 aa)). The TRAM domain maps to 413–475 (DGTVGHVVPV…TNSLSGTLVQ (63 aa)).

Belongs to the methylthiotransferase family. MiaB subfamily. Monomer. The cofactor is [4Fe-4S] cluster.

Its subcellular location is the cytoplasm. It catalyses the reaction N(6)-dimethylallyladenosine(37) in tRNA + (sulfur carrier)-SH + AH2 + 2 S-adenosyl-L-methionine = 2-methylsulfanyl-N(6)-dimethylallyladenosine(37) in tRNA + (sulfur carrier)-H + 5'-deoxyadenosine + L-methionine + A + S-adenosyl-L-homocysteine + 2 H(+). Functionally, catalyzes the methylthiolation of N6-(dimethylallyl)adenosine (i(6)A), leading to the formation of 2-methylthio-N6-(dimethylallyl)adenosine (ms(2)i(6)A) at position 37 in tRNAs that read codons beginning with uridine. The sequence is that of tRNA-2-methylthio-N(6)-dimethylallyladenosine synthase from Gluconacetobacter diazotrophicus (strain ATCC 49037 / DSM 5601 / CCUG 37298 / CIP 103539 / LMG 7603 / PAl5).